The chain runs to 295 residues: Diaminopimelate epimerase (295 aa).

Substrate is bound by residues Asn-13, Gln-46, and Asn-66. The Proton donor role is filled by Cys-75. Substrate is bound by residues 76–77, Asn-162, Asn-195, and 213–214; these read GN and ER. Cys-222 (proton acceptor) is an active-site residue. A substrate-binding site is contributed by 223-224; the sequence is GT.

It belongs to the diaminopimelate epimerase family. Homodimer.

The protein resides in the cytoplasm. It catalyses the reaction (2S,6S)-2,6-diaminopimelate = meso-2,6-diaminopimelate. Its pathway is amino-acid biosynthesis; L-lysine biosynthesis via DAP pathway; DL-2,6-diaminopimelate from LL-2,6-diaminopimelate: step 1/1. Functionally, catalyzes the stereoinversion of LL-2,6-diaminopimelate (L,L-DAP) to meso-diaminopimelate (meso-DAP), a precursor of L-lysine and an essential component of the bacterial peptidoglycan. The sequence is that of Diaminopimelate epimerase from Psychrobacter cryohalolentis (strain ATCC BAA-1226 / DSM 17306 / VKM B-2378 / K5).